The following is a 378-amino-acid chain: Cobalt-precorrin-5B C(1)-methyltransferase (378 aa).

Belongs to the CbiD family.

It carries out the reaction Co-precorrin-5B + S-adenosyl-L-methionine = Co-precorrin-6A + S-adenosyl-L-homocysteine. It functions in the pathway cofactor biosynthesis; adenosylcobalamin biosynthesis; cob(II)yrinate a,c-diamide from sirohydrochlorin (anaerobic route): step 6/10. Functionally, catalyzes the methylation of C-1 in cobalt-precorrin-5B to form cobalt-precorrin-6A. In Synechocystis sp. (strain ATCC 27184 / PCC 6803 / Kazusa), this protein is Cobalt-precorrin-5B C(1)-methyltransferase.